Consider the following 469-residue polypeptide: Probable Xaa-Pro aminopeptidase PEPP (469 aa).

Residues Asp-264, Asp-275, Glu-398, and Glu-438 each coordinate Mn(2+).

The protein belongs to the peptidase M24B family. Mn(2+) serves as cofactor.

It catalyses the reaction Release of any N-terminal amino acid, including proline, that is linked to proline, even from a dipeptide or tripeptide.. Functionally, catalyzes the removal of a penultimate prolyl residue from the N-termini of peptides. This Ajellomyces capsulatus (strain H143) (Darling's disease fungus) protein is Probable Xaa-Pro aminopeptidase PEPP (PEPP).